A 321-amino-acid polypeptide reads, in one-letter code: Glucokinase (321 aa).

Position 8-13 (Gly-8–Thr-13) interacts with ATP.

The protein belongs to the bacterial glucokinase family.

The protein localises to the cytoplasm. The catalysed reaction is D-glucose + ATP = D-glucose 6-phosphate + ADP + H(+). The sequence is that of Glucokinase from Salmonella choleraesuis (strain SC-B67).